Here is a 422-residue protein sequence, read N- to C-terminus: Trichothecene biosynthesis transcription regulator TRI10 (422 aa).

The protein belongs to the TRI10 transcription regulator family.

The protein localises to the nucleus. In terms of biological role, transcriptional activator of all of the trichothecene biosynthesis genes. Acts upstream of the cluster-encoded transcription factor TRI6 and is necessary for full expression of both the other trichothecene genes and the genes for the primary metabolic pathway that precedes the trichothecene biosynthetic pathway. The chain is Trichothecene biosynthesis transcription regulator TRI10 from Trichoderma arundinaceum.